The chain runs to 154 residues: Endoribonuclease YbeY (154 aa).

The Zn(2+) site is built by His114, His118, and His124.

Belongs to the endoribonuclease YbeY family. It depends on Zn(2+) as a cofactor.

Its subcellular location is the cytoplasm. Its function is as follows. Single strand-specific metallo-endoribonuclease involved in late-stage 70S ribosome quality control and in maturation of the 3' terminus of the 16S rRNA. This Histophilus somni (strain 129Pt) (Haemophilus somnus) protein is Endoribonuclease YbeY.